A 274-amino-acid polypeptide reads, in one-letter code: Nitrogenase iron protein (274 aa).

An ATP-binding site is contributed by 8 to 15; sequence GKGGIGKS. Cys94 serves as a coordination point for [4Fe-4S] cluster. At Arg97 the chain carries ADP-ribosylarginine; by dinitrogenase reductase ADP-ribosyltransferase. Cys131 contributes to the [4Fe-4S] cluster binding site.

Belongs to the NifH/BchL/ChlL family. Homodimer. The cofactor is [4Fe-4S] cluster. In terms of processing, the reversible ADP-ribosylation of Arg-97 inactivates the nitrogenase reductase and regulates nitrogenase activity.

The catalysed reaction is N2 + 8 reduced [2Fe-2S]-[ferredoxin] + 16 ATP + 16 H2O = H2 + 8 oxidized [2Fe-2S]-[ferredoxin] + 2 NH4(+) + 16 ADP + 16 phosphate + 6 H(+). Its function is as follows. The key enzymatic reactions in nitrogen fixation are catalyzed by the nitrogenase complex, which has 2 components: the iron protein and the molybdenum-iron protein. The protein is Nitrogenase iron protein of Solidesulfovibrio magneticus (strain ATCC 700980 / DSM 13731 / RS-1) (Desulfovibrio magneticus).